Here is a 498-residue protein sequence, read N- to C-terminus: Hexokinase-1 (498 aa).

A helical membrane pass occupies residues alanine 4–valine 24. The Hexokinase domain occupies glycine 35–alanine 487. The tract at residues threonine 90–valine 228 is hexokinase small subdomain. The ADP site is built by glycine 104, threonine 105, and asparagine 106. Residues threonine 194, lysine 195, asparagine 229, and aspartate 230 each contribute to the D-glucose site. The tract at residues asparagine 229–aspartate 476 is hexokinase large subdomain. Threonine 253 contributes to the ADP binding site. Residues asparagine 256, glutamate 284, and glutamate 315 each contribute to the D-glucose site. An ADP-binding site is contributed by glycine 441.

The protein belongs to the hexokinase family.

The protein localises to the plastid. It localises to the chloroplast outer membrane. The enzyme catalyses a D-hexose + ATP = a D-hexose 6-phosphate + ADP + H(+). It catalyses the reaction D-fructose + ATP = D-fructose 6-phosphate + ADP + H(+). The catalysed reaction is D-glucose + ATP = D-glucose 6-phosphate + ADP + H(+). The protein operates within carbohydrate metabolism; hexose metabolism. Its pathway is carbohydrate degradation; glycolysis; D-glyceraldehyde 3-phosphate and glycerone phosphate from D-glucose: step 1/4. Functionally, fructose and glucose phosphorylating enzyme. In Spinacia oleracea (Spinach), this protein is Hexokinase-1 (HXK1).